The sequence spans 533 residues: Early growth response protein 1 (533 aa).

2 disordered regions span residues 1 to 94 (MAAA…EQPY) and 161 to 237 (MTNP…PPPA). Over residues 68–77 (SGGGGGGGSN) the composition is skewed to gly residues. Residues 164-189 (PPTSSSSAPSPAASSSSSASQSPPLS) show a composition bias toward low complexity. Residue lysine 303 forms a Glycyl lysine isopeptide (Lys-Gly) (interchain with G-Cter in SUMO2) linkage. The interval 316–336 (PSRMRKYPNRPSKTPPHERPY) is disordered. 3 C2H2-type zinc fingers span residues 336 to 360 (YACPVESCDRRFSRSDELTRHIRIH), 366 to 388 (FQCRICMRNFSRSDHLTTHIRTH), and 394 to 416 (FACDICGRKFARSDERKRHTKIH). The tract at residues 407 to 478 (DERKRHTKIH…SSTYPSPAHS (72 aa)) is disordered. Residues 411–421 (RHTKIHLRQKD) are compositionally biased toward basic residues. Residues 427–475 (SVVASPAASSLSSYPSPVATSYPSPATTSFPSPVPTSYSSPGSSTYPSP) are compositionally biased toward low complexity.

The protein belongs to the EGR C2H2-type zinc-finger protein family. As to quaternary structure, interacts with SNAI1 and SP1 upon 12-O-tetradecanoylphorbol-13-acetate (TPA) induction. Detected in lung vasculature and in mononuclear phagocytes. Detected in liver (at protein level). Expressed in the liver in a circadian manner.

Its subcellular location is the nucleus. It localises to the cytoplasm. Its function is as follows. Transcriptional regulator. Recognizes and binds to the DNA sequence 5'-GCG(T/G)GGGCG-3'(EGR-site) in the promoter region of target genes. Binds double-stranded target DNA, irrespective of the cytosine methylation status. Regulates the transcription of numerous target genes, and thereby plays an important role in regulating the response to growth factors, DNA damage, and ischemia. Plays a role in the regulation of cell survival, proliferation and cell death. Activates expression of p53/TP53 and TGFB1, and thereby helps prevent tumor formation. Required for normal progress through mitosis and normal proliferation of hepatocytes after partial hepatectomy. Mediates responses to ischemia and hypoxia; regulates the expression of proteins such as IL1B and CXCL2 that are involved in inflammatory processes and development of tissue damage after ischemia. Regulates biosynthesis of luteinizing hormone (LHB) in the pituitary. Regulates the amplitude of the expression rhythms of clock genes: BMAL1, PER2 and NR1D1 in the liver via the activation of PER1 (clock repressor) transcription. Regulates the rhythmic expression of core-clock gene BMAL1 in the suprachiasmatic nucleus (SCN). This is Early growth response protein 1 (Egr1) from Mus musculus (Mouse).